The primary structure comprises 479 residues: Glycogen synthase (479 aa).

Lysine 15 is an ADP-alpha-D-glucose binding site.

Belongs to the glycosyltransferase 1 family. Bacterial/plant glycogen synthase subfamily.

The catalysed reaction is [(1-&gt;4)-alpha-D-glucosyl](n) + ADP-alpha-D-glucose = [(1-&gt;4)-alpha-D-glucosyl](n+1) + ADP + H(+). The protein operates within glycan biosynthesis; glycogen biosynthesis. Synthesizes alpha-1,4-glucan chains using ADP-glucose. The sequence is that of Glycogen synthase from Clostridium novyi (strain NT).